Reading from the N-terminus, the 199-residue chain is NAD(P)H dehydrogenase (quinone) (199 aa).

One can recognise a Flavodoxin-like domain in the interval 4–190 (VLVLYYSAYG…GGARYQGKVI (187 aa)). FMN contacts are provided by residues 10–15 (SAYGHI) and 78–80 (TRF). Position 12 (tyrosine 12) interacts with NAD(+). Tryptophan 98 serves as a coordination point for substrate. FMN contacts are provided by residues 113–119 (STASQHG) and histidine 134.

Belongs to the WrbA family. FMN serves as cofactor.

It carries out the reaction a quinone + NADH + H(+) = a quinol + NAD(+). The enzyme catalyses a quinone + NADPH + H(+) = a quinol + NADP(+). In Rhodopseudomonas palustris (strain BisB18), this protein is NAD(P)H dehydrogenase (quinone).